Here is a 186-residue protein sequence, read N- to C-terminus: Ribosome-recycling factor (186 aa).

The disordered stretch occupies residues 135–156 (DANDEVKKLQKDKAVSEDEGKK).

It belongs to the RRF family.

It localises to the cytoplasm. Functionally, responsible for the release of ribosomes from messenger RNA at the termination of protein biosynthesis. May increase the efficiency of translation by recycling ribosomes from one round of translation to another. In Bdellovibrio bacteriovorus (strain ATCC 15356 / DSM 50701 / NCIMB 9529 / HD100), this protein is Ribosome-recycling factor.